The primary structure comprises 295 residues: Replication-associated protein A (295 aa).

Residues 12-114 (RLQTKYVFLT…DGNVITKGEF (103 aa)) form the CRESS-DNA virus Rep endonuclease domain. Residues 19–22 (FLTY) carry the RCR-1 motif. A divalent metal cation is bound by residues Glu-53, His-61, and His-63. Residues 61 to 63 (HLH) carry the RCR-2 motif. The active-site For DNA cleavage activity is Tyr-101. Positions 101-104 (YISK) match the RCR-3 motif. Asp-105 is a binding site for a divalent metal cation. Residues 163-175 (SANKLFPPQPEIY) form an oligomerization region. Residues 184–188 (LQCHE) carry the LXCXE motif, interaction with host RBR1 motif. A disordered region spans residues 232–295 (EGLEPGSPPS…PSNSSHSGSN (64 aa)). Low complexity predominate over residues 267–295 (PSTSLSMMTTRPTTSSTTSPSNSSHSGSN).

Belongs to the geminiviridae Rep protein family. As to quaternary structure, homooligomer. Interacts (via LXCXE domain) with host retinoblastoma-related protein 1 (RBR1), and may thereby deregulate the host cell cycle. Part of the C- and V-complexes which are RepA-Rep-DNA complexes involved in the c-sense and v-sense transcription. Mg(2+) serves as cofactor. The cofactor is Mn(2+).

The protein localises to the host nucleus. Its subcellular location is the host cytoplasm. Functionally, implicated in enhancement of V-sense gene expression. Acts a an inhibitor of C-sense gene transcription. This chain is Replication-associated protein A, found in Datura stramonium (Jimsonweed).